The following is a 1382-amino-acid chain: DNA-directed RNA polymerase subunit beta' (1382 aa).

Residues C70, C72, C85, and C88 each coordinate Zn(2+). Residues D460, D462, and D464 each contribute to the Mg(2+) site. The Zn(2+) site is built by C808, C882, C889, and C892.

This sequence belongs to the RNA polymerase beta' chain family. In terms of assembly, the RNAP catalytic core consists of 2 alpha, 1 beta, 1 beta' and 1 omega subunit. When a sigma factor is associated with the core the holoenzyme is formed, which can initiate transcription. The cofactor is Mg(2+). Zn(2+) is required as a cofactor.

It carries out the reaction RNA(n) + a ribonucleoside 5'-triphosphate = RNA(n+1) + diphosphate. Functionally, DNA-dependent RNA polymerase catalyzes the transcription of DNA into RNA using the four ribonucleoside triphosphates as substrates. The chain is DNA-directed RNA polymerase subunit beta' from Citrifermentans bemidjiense (strain ATCC BAA-1014 / DSM 16622 / JCM 12645 / Bem) (Geobacter bemidjiensis).